We begin with the raw amino-acid sequence, 417 residues long: Serine hydroxymethyltransferase (417 aa).

Residues Leu121 and 125-127 each bind (6S)-5,6,7,8-tetrahydrofolate; that span reads GHL. Lys229 is modified (N6-(pyridoxal phosphate)lysine). 355-357 contacts (6S)-5,6,7,8-tetrahydrofolate; that stretch reads SPF.

This sequence belongs to the SHMT family. In terms of assembly, homodimer. It depends on pyridoxal 5'-phosphate as a cofactor.

Its subcellular location is the cytoplasm. The enzyme catalyses (6R)-5,10-methylene-5,6,7,8-tetrahydrofolate + glycine + H2O = (6S)-5,6,7,8-tetrahydrofolate + L-serine. The protein operates within one-carbon metabolism; tetrahydrofolate interconversion. It participates in amino-acid biosynthesis; glycine biosynthesis; glycine from L-serine: step 1/1. Catalyzes the reversible interconversion of serine and glycine with tetrahydrofolate (THF) serving as the one-carbon carrier. This reaction serves as the major source of one-carbon groups required for the biosynthesis of purines, thymidylate, methionine, and other important biomolecules. Also exhibits THF-independent aldolase activity toward beta-hydroxyamino acids, producing glycine and aldehydes, via a retro-aldol mechanism. The polypeptide is Serine hydroxymethyltransferase (Shewanella frigidimarina (strain NCIMB 400)).